The primary structure comprises 596 residues: Trehalase (596 aa).

The signal sequence occupies residues 1-23 (MFKLPTISLLLVSWSCLVALSQA). Substrate-binding positions include Arg193, 200–201 (WD), Asn237, and 246–248 (RSQ). Asn288 and Asn293 each carry an N-linked (GlcNAc...) asparagine glycan. Residues 303-323 (SSGPRPESYREDVETGEEFPT) form a disordered region. Substrate contacts are provided by residues 307-309 (RPE) and Gly341. Asp343 functions as the Proton donor/acceptor in the catalytic mechanism. Residues Asn359, Asn451, and Asn516 are each glycosylated (N-linked (GlcNAc...) asparagine). Glu541 serves as the catalytic Proton donor/acceptor. Glu556 is a binding site for substrate.

It belongs to the glycosyl hydrolase 37 family. As to expression, in the adult brain predominantly expressed in glial cells (at protein level).

It carries out the reaction alpha,alpha-trehalose + H2O = alpha-D-glucose + beta-D-glucose. Enzyme that cleaves trehalose to produce 2 glucose molecules that can be used by the glycolytic pathway. Glycolysis is essential in glial cells but not in neurons; neurons rely on the citric acid cycle for their energy needs, and on lactate and alanine secreted into the hemolymph by glial cells to fuel it. The sequence is that of Trehalase from Drosophila melanogaster (Fruit fly).